A 174-amino-acid chain; its full sequence is Large ribosomal subunit protein uL10 (174 aa).

It belongs to the universal ribosomal protein uL10 family. As to quaternary structure, part of the ribosomal stalk of the 50S ribosomal subunit. The N-terminus interacts with L11 and the large rRNA to form the base of the stalk. The C-terminus forms an elongated spine to which L12 dimers bind in a sequential fashion forming a multimeric L10(L12)X complex.

Its function is as follows. Forms part of the ribosomal stalk, playing a central role in the interaction of the ribosome with GTP-bound translation factors. This Nitrosospira multiformis (strain ATCC 25196 / NCIMB 11849 / C 71) protein is Large ribosomal subunit protein uL10.